The primary structure comprises 76 residues: Putative protein StbC (76 aa).

This is Putative protein StbC (stbC) from Escherichia coli.